The following is a 295-amino-acid chain: HTH-type transcriptional regulator ShiR (295 aa).

Residues 1–58 form the HTH lysR-type domain; sequence MEIRWLEGFIAVAEELHFSNAAIRLGMPQSPLSQLIRRLESELGQKLFDRSTRSVELT. The H-T-H motif DNA-binding region spans 18 to 37; sequence FSNAAIRLGMPQSPLSQLIR.

This sequence belongs to the LysR transcriptional regulatory family.

In terms of biological role, activates expression of the shikimate transporter ShiA in the presence of shikimate. Binds to the shiA promoter region. The protein is HTH-type transcriptional regulator ShiR of Corynebacterium glutamicum (strain R).